Consider the following 180-residue polypeptide: Shikimate kinase (180 aa).

14 to 19 (GAGKSC) serves as a coordination point for ATP. Position 18 (serine 18) interacts with Mg(2+). The substrate site is built by aspartate 36, arginine 60, and glycine 82. Arginine 120 lines the ATP pocket. Arginine 139 provides a ligand contact to substrate.

Belongs to the shikimate kinase family. Monomer. It depends on Mg(2+) as a cofactor.

The protein localises to the cytoplasm. The enzyme catalyses shikimate + ATP = 3-phosphoshikimate + ADP + H(+). Its pathway is metabolic intermediate biosynthesis; chorismate biosynthesis; chorismate from D-erythrose 4-phosphate and phosphoenolpyruvate: step 5/7. Functionally, catalyzes the specific phosphorylation of the 3-hydroxyl group of shikimic acid using ATP as a cosubstrate. This is Shikimate kinase from Xanthomonas euvesicatoria pv. vesicatoria (strain 85-10) (Xanthomonas campestris pv. vesicatoria).